A 294-amino-acid polypeptide reads, in one-letter code: MTATVSHAGPQVVILTGVSGSGKSTALRALEDAGFYCVDNLPIVFLEKLLELSGHTAGEVSRMALVVDAREGRFLVEAPRIIRELRQKGADVEVLFLDASDEALVRRYSETRRRHPLAGEGGTVPDGIAAERLALADVRGIADEVIDTTTLNVHELKRLVTRRFVAGEGAKLGVTLVSFGFRFGIPTHADLVLDVRFLPNPFFVPELKPHPGTDPRVAEFVLGQADAKAFLERLTDLLGFLLPRYRNEGKSYLTIAIGCTGGKHRSVALAAALAERLEGSGQPVRLWHRDVEKE.

Gly-17–Ser-24 is a binding site for ATP. Position 68–71 (Asp-68–Glu-71) interacts with GTP.

Belongs to the RapZ-like family.

Displays ATPase and GTPase activities. The polypeptide is Nucleotide-binding protein A2cp1_0165 (Anaeromyxobacter dehalogenans (strain 2CP-1 / ATCC BAA-258)).